Here is a 289-residue protein sequence, read N- to C-terminus: 33 kDa chaperonin (289 aa).

Disulfide bonds link Cys-230–Cys-232 and Cys-263–Cys-266.

This sequence belongs to the HSP33 family. Post-translationally, under oxidizing conditions two disulfide bonds are formed involving the reactive cysteines. Under reducing conditions zinc is bound to the reactive cysteines and the protein is inactive.

It localises to the cytoplasm. In terms of biological role, redox regulated molecular chaperone. Protects both thermally unfolding and oxidatively damaged proteins from irreversible aggregation. Plays an important role in the bacterial defense system toward oxidative stress. This Shigella flexneri serotype 5b (strain 8401) protein is 33 kDa chaperonin.